A 394-amino-acid chain; its full sequence is Flavohemoprotein (394 aa).

Positions 1 to 136 constitute a Globin domain; it reads MLSENTINIV…LANVFIQREE (136 aa). H85 is a heme b binding site. Catalysis depends on charge relay system residues Y95 and E135. Residues 147–394 form a reductase region; it reads GGWRGLREFE…YECFGPHKVV (248 aa). One can recognise an FAD-binding FR-type domain in the interval 150–255; that stretch reads RGLREFELVE…AAPAGDFFLD (106 aa). FAD contacts are provided by residues Y188 and 204–207; that span reads RQYS. NADP(+) is bound at residue 268-273; sequence GVGLTP. 387-390 lines the FAD pocket; the sequence is CFGP.

Belongs to the globin family. Two-domain flavohemoproteins subfamily. This sequence in the C-terminal section; belongs to the flavoprotein pyridine nucleotide cytochrome reductase family. Heme b is required as a cofactor. Requires FAD as cofactor.

The enzyme catalyses 2 nitric oxide + NADPH + 2 O2 = 2 nitrate + NADP(+) + H(+). The catalysed reaction is 2 nitric oxide + NADH + 2 O2 = 2 nitrate + NAD(+) + H(+). Functionally, is involved in NO detoxification in an aerobic process, termed nitric oxide dioxygenase (NOD) reaction that utilizes O(2) and NAD(P)H to convert NO to nitrate, which protects the bacterium from various noxious nitrogen compounds. Therefore, plays a central role in the inducible response to nitrosative stress. This Vibrio vulnificus (strain CMCP6) protein is Flavohemoprotein.